A 163-amino-acid chain; its full sequence is ECF RNA polymerase sigma factor SigM (163 aa).

The short motif at 30–43 is the Polymerase core binding element; it reads DLLQETFMRAYIHI. The segment at residues 127 to 146 is a DNA-binding region (H-T-H motif); the sequence is YKEASHIMNISEANFKSVLF.

The protein belongs to the sigma-70 factor family. ECF subfamily. Interacts with the N-terminus of YhdL, which is probably its anti-sigma factor. Interacts transiently with the RNAP core.

Functionally, sigma factors are initiation factors that promote the attachment of RNA polymerase (RNAP) to specific initiation sites and are then released. Extracytoplasmic function (ECF) sigma factors are held in an inactive form by a cognate anti-sigma factor (YhdL) until released. This sigma factor is involved in the maintenance of membrane and cell wall integrity in response to environmental stresses including salt, acid, ethanol and antibiotics stress. Partially regulates transcription from a number of genes including disA. Associates with RNAP core under all growth phases. The protein is ECF RNA polymerase sigma factor SigM (sigM) of Bacillus subtilis (strain 168).